Here is a 613-residue protein sequence, read N- to C-terminus: MFRCGGLAAGALKQKLVPLVRTVCVRSPRQRNRLPGNLFQRWHVPLELQMTRQMASSGASGGKIDNSVLVLIVGLSTVGAGAYAYKTMKEDEKRYNERISGLGLTPEQKQKKAALSASEGEEVPQDKAPSHVPFLLIGGGTAAFAAARSIRARDPGARVLIVSEDPELPYMRPPLSKELWFSDDPNVTKTLRFKQWNGKERSIYFQPPSFYVSAQDLPHIENGGVAVLTGKKVVQLDVRDNMVKLNDGSQITYEKCLIATGGTPRSLSAIDRAGAEVKSRTTLFRKIGDFRSLEKISREVKSITIIGGGFLGSELACALGRKARALGTEVIQLFPEKGNMGKILPEYLSNWTMEKVRREGVKVMPNAIVQSVGVSSGKLLIKLKDGRKVETDHIVAAVGLEPNVELAKTGGLEIDSDFGGFRVNAELQARSNIWVAGDAACFYDIKLGRRRVEHHDHAVVSGRLAGENMTGAAKPYWHQSMFWSDLGPDVGYEAIGLVDSSLPTVGVFAKATAQDNPKSATEQSGTGIRSESETESEASEITIPPSTPAVPQAPVQGEDYGKGVIFYLRDKVVVGIVLWNIFNRMPIARKIIKDGEQHEDLNEVAKLFNIHED.

2 short sequence motifs (mitochondrial localization signal) span residues 1–31 and 63–89; these read MFRCGGLAAGALKQKLVPLVRTVCVRSPRQR and KIDNSVLVLIVGLSTVGAGAYAYKTMK. Residues 1 to 54 constitute a mitochondrion transit peptide; it reads MFRCGGLAAGALKQKLVPLVRTVCVRSPRQRNRLPGNLFQRWHVPLELQMTRQM. Residues 55–101 constitute a propeptide, removed in mature form; it reads ASSGASGGKIDNSVLVLIVGLSTVGAGAYAYKTMKEDEKRYNERISG. The interval 100–127 is disordered; the sequence is SGLGLTPEQKQKKAALSASEGEEVPQDK. Phosphothreonine is present on T105. K109 is subject to N6-succinyllysine. Phosphoserine is present on residues S116 and S118. Positions 134–483 are FAD-dependent oxidoreductase; it reads FLLIGGGTAA…KPYWHQSMFW (350 aa). Residues 138-142, 164-165, R172, and K177 each bind FAD; these read GGGTA and ED. Residue W196 participates in NAD(+) binding. An FAD-binding site is contributed by V233. Residue K255 forms a Glycyl lysine isopeptide (Lys-Gly) (interchain with G-Cter in ubiquitin) linkage. A Phosphoserine modification is found at S268. R285 is a binding site for FAD. S292 bears the Phosphoserine mark. Residues 308 to 311, E336, and K342 contribute to the NAD(+) site; that span reads GGFL. S371 bears the Phosphoserine mark. An N6-acetyllysine modification is found at K388. G399 serves as a coordination point for NAD(+). D438 is a binding site for FAD. Positions 446–451 match the Nuclear localization signal motif; the sequence is KLGRRR. NAD(+) contacts are provided by residues 453–454, W483, and E493; that span reads EH. FAD contacts are provided by residues 454–455 and W483; that span reads HH. Polar residues predominate over residues 513-529; sequence AQDNPKSATEQSGTGIR. The interval 513 to 554 is disordered; the sequence is AQDNPKSATEQSGTGIRSESETESEASEITIPPSTPAVPQAP. Phosphothreonine is present on T521. Residues S524 and S530 each carry the phosphoserine modification. N583 provides a ligand contact to NAD(+). K593 bears the N6-acetyllysine mark.

It belongs to the FAD-dependent oxidoreductase family. As to quaternary structure, monomer (oxidized form). Homodimer (reduced form). Upon reduction with NADH, undergoes dimerization and forms tight, long-lived FADH2-NAD charge transfer complexes (CTC) resistant to oxidation. Also dimerizes with isoform 3 preventing its release from mitochondria. Interacts with XIAP/BIRC4. Interacts (via N-terminus) with EIF3G (via C-terminus). Interacts with PRELID1. Interacts with CHCHD4; the interaction increases in presence of NADH. Interacts with processed form of PARP1 (Poly [ADP-ribose] polymerase 1, processed C-terminus); interaction is mediated with poly-ADP-ribose chains attached to PARP1, promoting translocation into the nucleus. The cofactor is FAD. Under normal conditions, a 54-residue N-terminal segment is first proteolytically removed during or just after translocation into the mitochondrial intermembrane space (IMS) by the mitochondrial processing peptidase (MPP) to form the inner-membrane-anchored mature form (AIFmit). During apoptosis, it is further proteolytically processed at amino-acid position 101 leading to the generation of the mature form, which is confined to the mitochondrial IMS in a soluble form (AIFsol). AIFsol is released to the cytoplasm in response to specific death signals, and translocated to the nucleus, where it induces nuclear apoptosis in a caspase-independent manner. In terms of processing, ubiquitination by XIAP/BIRC4 does not lead to proteasomal degradation. Ubiquitination at Lys-255 by XIAP/BIRC4 blocks its ability to bind DNA and induce chromatin degradation, thereby inhibiting its ability to induce cell death. As to expression, expressed in all tested tissues. Detected in muscle and skin fibroblasts (at protein level). Expressed in osteoblasts (at protein level). Brain specific. In terms of tissue distribution, expressed in all tested tissues except brain. As to expression, isoform 5 is frequently down-regulated in human cancers.

It is found in the mitochondrion intermembrane space. The protein resides in the mitochondrion inner membrane. Its subcellular location is the cytoplasm. The protein localises to the nucleus. It localises to the perinuclear region. It is found in the mitochondrion. The protein resides in the cytosol. It carries out the reaction A + NADH + H(+) = AH2 + NAD(+). Its function is as follows. Functions both as NADH oxidoreductase and as regulator of apoptosis. In response to apoptotic stimuli, it is released from the mitochondrion intermembrane space into the cytosol and to the nucleus, where it functions as a proapoptotic factor in a caspase-independent pathway. Release into the cytoplasm is mediated upon binding to poly-ADP-ribose chains. The soluble form (AIFsol) found in the nucleus induces 'parthanatos' i.e. caspase-independent fragmentation of chromosomal DNA. Binds to DNA in a sequence-independent manner. Interacts with EIF3G, and thereby inhibits the EIF3 machinery and protein synthesis, and activates caspase-7 to amplify apoptosis. Plays a critical role in caspase-independent, pyknotic cell death in hydrogen peroxide-exposed cells. In contrast, participates in normal mitochondrial metabolism. Plays an important role in the regulation of respiratory chain biogenesis by interacting with CHCHD4 and controlling CHCHD4 mitochondrial import. Functionally, has NADH oxidoreductase activity. Does not induce nuclear apoptosis. In terms of biological role, pro-apoptotic isoform. In Homo sapiens (Human), this protein is Apoptosis-inducing factor 1, mitochondrial.